A 797-amino-acid chain; its full sequence is Probable DNA polymerase (797 aa).

This sequence belongs to the DNA polymerase type-B family.

It is found in the mitochondrion. The catalysed reaction is DNA(n) + a 2'-deoxyribonucleoside 5'-triphosphate = DNA(n+1) + diphosphate. This is Probable DNA polymerase from Agaricus bitorquis (Pavement mushroom).